The primary structure comprises 214 residues: Small ribosomal subunit protein uS5 (214 aa).

Residues 54–117 form the S5 DRBM domain; it reads LRYDIVDIGI…RDAKMRIIPV (64 aa).

Belongs to the universal ribosomal protein uS5 family. In terms of assembly, part of the 30S ribosomal subunit. Contacts protein S4.

Functionally, with S4 and S12 plays an important role in translational accuracy. In Sulfolobus acidocaldarius (strain ATCC 33909 / DSM 639 / JCM 8929 / NBRC 15157 / NCIMB 11770), this protein is Small ribosomal subunit protein uS5.